The following is a 385-amino-acid chain: Lipid-A-disaccharide synthase (385 aa).

It belongs to the LpxB family.

The enzyme catalyses a lipid X + a UDP-2-N,3-O-bis[(3R)-3-hydroxyacyl]-alpha-D-glucosamine = a lipid A disaccharide + UDP + H(+). The protein operates within bacterial outer membrane biogenesis; LPS lipid A biosynthesis. In terms of biological role, condensation of UDP-2,3-diacylglucosamine and 2,3-diacylglucosamine-1-phosphate to form lipid A disaccharide, a precursor of lipid A, a phosphorylated glycolipid that anchors the lipopolysaccharide to the outer membrane of the cell. This chain is Lipid-A-disaccharide synthase, found in Pseudoalteromonas translucida (strain TAC 125).